Consider the following 376-residue polypeptide: MELHLALRASPLPAADPGRRPPPPRGNFATNCTAAINSTHISQEKFRSLDSWVEHNMLTFLKPVEKCWQPQDFLPDPSHLSAEELGDAVREIHERAAEIPDEVWVCMVGNMVTEEALPTYQSLISSVLGGTVAGSTPWDRWIRGWSAEENRHGDLLNKYLYLTGRLDMRQVEKTIQYLIGSGMDVGVGNSILCGFIYTCFQEKATFISHGNTARLAKHHGDTTLAKICGLVAADEKRHAVAYTNLMKKLFEVAPNESMLAFAHIMRAHVTMPASRMFDGRDPRLFTHFSAVTQKIGVYTVRDYGEMLDFFLKEWEISAVVDDLSPEGRQAQEYVCGLPEVMGKMAERADDRRKKLVNVGEPRYIPFSWIFNKQVCV.

The N-terminal 33 residues, 1–33 (MELHLALRASPLPAADPGRRPPPPRGNFATNCT), are a transit peptide targeting the chloroplast. Fe cation contacts are provided by glutamate 114, glutamate 149, histidine 152, glutamate 202, glutamate 235, and histidine 238.

It belongs to the fatty acid desaturase type 2 family. Homodimer. Fe(2+) is required as a cofactor. In terms of tissue distribution, preferentially expressed in the flower labellum.

The protein localises to the plastid. It is found in the chloroplast stroma. It catalyses the reaction hexadecanoyl-[ACP] + 2 reduced [2Fe-2S]-[ferredoxin] + O2 + 2 H(+) = (4Z)-hexadecenoyl-[ACP] + 2 oxidized [2Fe-2S]-[ferredoxin] + 2 H2O. The catalysed reaction is octadecanoyl-[ACP] + 2 reduced [2Fe-2S]-[ferredoxin] + O2 + 2 H(+) = (9Z)-octadecenoyl-[ACP] + 2 oxidized [2Fe-2S]-[ferredoxin] + 2 H2O. It participates in lipid metabolism; fatty acid metabolism. Converts stearoyl-ACP to oleoyl-ACP by introduction of a cis double bond between carbons 9 and 10 of the acyl chain. Converts palmitoyl-ACP to (4Z)-hexadec-4-enoyl-ACP by introduction of a cis double bond between carbons 4 and 5 of the acyl chain. Catalyzes the desaturation of saturated fatty acid 18:0 and 16:0 to generate 18:1 (delta-9) and 16:1 (delta-4) intermediates, expected to give rise to 9-alkenes and 12-alkenes, respectively. This is Palmitoyl-[acyl-carrier-protein] 4-desaturase 2, chloroplastic (SAD2) from Ophrys sphegodes (Early spider orchid).